Reading from the N-terminus, the 295-residue chain is 15-cis-phytoene synthase (295 aa).

It belongs to the phytoene/squalene synthase family. The cofactor is ATP. Mn(2+) is required as a cofactor.

It carries out the reaction 2 (2E,6E,10E)-geranylgeranyl diphosphate = 15-cis-phytoene + 2 diphosphate. It participates in carotenoid biosynthesis; phytoene biosynthesis. Its activity is regulated as follows. Significant inhibition is seen at GGPP concentrations above 100 uM. Functionally, involved in the biosynthesis of carotenoids. Catalyzes stereoselectively the condensation of two molecules of geranylgeranyl diphosphate (GGPP) to give prephytoene diphosphate (PPPP) and the subsequent rearrangement of the cyclopropylcarbinyl intermediate to yield 15-cis-phytoene. In Enterobacter agglomerans (Erwinia herbicola), this protein is 15-cis-phytoene synthase (crtB).